We begin with the raw amino-acid sequence, 24 residues long: Lectin (24 aa).

The protein belongs to the leguminous lectin family. In terms of assembly, homotetramer.

Functionally, agglutinates erythrocytes of blood group A. Binds in decreasing order of affinity: N-acetyl-D-galactosamine, D-galactose, and D-galactosamine. The polypeptide is Lectin (Crotalaria pallida (Smooth rattlebox)).